The primary structure comprises 687 residues: MSSGECSNVQLDDHRKNNLEIDEGREFESKEEAFEFYKEYANSVGFTTIIKASRRSRMTGKFIDAKFVCTRYGSKKEDIDTGLGTDGFNIPQARKRGRINRSSSKTDCKAFLHVKRRQDGRWVVRSLVKEHNHEIFTGQADSLRELSGRRKLEKLNGAIVKEVKSRKLEDGDVERLLNFFTDMQVENPFFFYSIDLSEEQSLRNIFWVDAKAMHGCRPRVILTKHDQMLKEAVLEVFPSSRHCFYMWDTLGQMPEKLGHVIRLEKKLVDEINDAIYGSCQSEDFEKNWWEVVDRFHMRDNVWLQSLYEDREYWVPVYMKDVSLAGMCTAQRSDSVNSGLDKYIQRKTTFKAFLEQYKKMIQERYEEEEKSEIETLYKQPGLKSPSPFGKQMAEVYTREMFKKFQVEVLGGVACHPKKESEEDGVNKRTFRVQDYEQNRSFVVVWNSESSEVVCSCRLFELKGFLCRHAMIVLQMSGELSIPSQYVLKRWTKDAKSREVMESDQTDVESTKAQRYKDLCLRSLKLSEEASLSEESYNAVVNVLNEALRKWENKSNLIQNLEESESVTAQDLPIHEEQNNTYDMNKDDNVADTGQEYSLQEVWKVTALQEQRNRYSILDDYLSAQHMSHEMGQINSMASNRNGYCSVHQNIHSLQGQSITHPRLYETEQSSFRPEAMYERLQDMVKDLN.

Residues 35–137 (EFYKEYANSV…VKEHNHEIFT (103 aa)) enclose the FAR1 domain. Residues 211–254 (KAMHGCRPRVILTKHDQMLKEAVLEVFPSSRHCFYMWDTLGQMP) enclose the MULE domain. The segment at 440 to 476 (FVVVWNSESSEVVCSCRLFELKGFLCRHAMIVLQMSG) adopts an SWIM-type zinc-finger fold. Residues 540-562 (NVLNEALRKWENKSNLIQNLEES) adopt a coiled-coil conformation.

Belongs to the FHY3/FAR1 family. As to expression, expressed in rosette and cauline leaves, inflorescences stems, flowers and siliques.

It localises to the nucleus. In terms of biological role, putative transcription activator involved in regulating light control of development. In Arabidopsis thaliana (Mouse-ear cress), this protein is Protein FAR1-RELATED SEQUENCE 1 (FRS1).